The following is a 201-amino-acid chain: UPF0301 protein MAP_0045 (201 aa).

Belongs to the UPF0301 (AlgH) family.

In Mycolicibacterium paratuberculosis (strain ATCC BAA-968 / K-10) (Mycobacterium paratuberculosis), this protein is UPF0301 protein MAP_0045.